A 415-amino-acid polypeptide reads, in one-letter code: Small RNA 2'-O-methyltransferase (415 aa).

S-adenosyl-L-methionine contacts are provided by serine 99 and aspartate 117. 3 residues coordinate Mg(2+): glutamate 169, glutamate 172, and histidine 173.

This sequence belongs to the methyltransferase superfamily. HEN1 family. Requires Mg(2+) as cofactor.

It is found in the cytoplasm. It catalyses the reaction small RNA 3'-end nucleotide + S-adenosyl-L-methionine = small RNA 3'-end 2'-O-methylnucleotide + S-adenosyl-L-homocysteine + H(+). In terms of biological role, methyltransferase that adds a 2'-O-methyl group at the 3'-end of piRNAs, a class of 24 to 30 nucleotide RNAs that are generated by a Dicer-independent mechanism and are primarily derived from transposons and other repeated sequence elements. This probably protects the 3'-end of piRNAs from uridylation activity and subsequent degradation. Stabilization of piRNAs is essential for gametogenesis. In Bombyx mori (Silk moth), this protein is Small RNA 2'-O-methyltransferase.